We begin with the raw amino-acid sequence, 78 residues long: UPF0291 protein Ldb1355 (78 aa).

It belongs to the UPF0291 family.

The protein localises to the cytoplasm. This Lactobacillus delbrueckii subsp. bulgaricus (strain ATCC 11842 / DSM 20081 / BCRC 10696 / JCM 1002 / NBRC 13953 / NCIMB 11778 / NCTC 12712 / WDCM 00102 / Lb 14) protein is UPF0291 protein Ldb1355.